We begin with the raw amino-acid sequence, 22 residues long: Myofibril-bound serine protease (22 aa).

It belongs to the peptidase S1 family. Detected in muscle (at protein level).

It is found in the cytoplasm. Inhibited by the serine protease inhibitors, antipain, aprotinin, DFP, leupeptin, STI and TLCK, and by the cysteine proteinase inhibitors DTNB and to a lesser extent E-64. Not inhibited by the metalloproteinase inhibitor EDTA. Functionally, serine protease that selectively cleaves Arg-|-Xaa bonds. The sequence is that of Myofibril-bound serine protease from Cyprinus carpio (Common carp).